A 150-amino-acid polypeptide reads, in one-letter code: Arginine repressor (150 aa).

The protein belongs to the ArgR family.

The protein localises to the cytoplasm. It functions in the pathway amino-acid biosynthesis; L-arginine biosynthesis [regulation]. Functionally, regulates arginine biosynthesis genes. The sequence is that of Arginine repressor from Staphylococcus carnosus (strain TM300).